Reading from the N-terminus, the 260-residue chain is Malonyl-[acyl-carrier protein] O-methyltransferase (260 aa).

It belongs to the methyltransferase superfamily.

It carries out the reaction malonyl-[ACP] + S-adenosyl-L-methionine = malonyl-[ACP] methyl ester + S-adenosyl-L-homocysteine. It participates in cofactor biosynthesis; biotin biosynthesis. Converts the free carboxyl group of a malonyl-thioester to its methyl ester by transfer of a methyl group from S-adenosyl-L-methionine (SAM). It allows to synthesize pimeloyl-ACP via the fatty acid synthetic pathway. The chain is Malonyl-[acyl-carrier protein] O-methyltransferase from Herminiimonas arsenicoxydans.